A 182-amino-acid chain; its full sequence is Nascent polypeptide-associated complex subunit alpha (182 aa).

The NAC-A/B domain occupies 17–81 (NKNEKKAKEL…AKVDDMNQRI (65 aa)). Positions 120-148 (ASLQGGESNADAAEDDNEEVDETGINPKD) are disordered. Residues 131–141 (AAEDDNEEVDE) show a composition bias toward acidic residues. The 39-residue stretch at 144–182 (INPKDIDLIVEQTRVSRGSAVKALKKHDGDMVNALMELS) folds into the UBA domain.

The protein belongs to the NAC-alpha family. In terms of assembly, part of the nascent polypeptide-associated complex (NAC), consisting of EGD2 and EGD1. NAC associates with ribosomes via EGD1.

It is found in the cytoplasm. The protein localises to the nucleus. In terms of biological role, component of the nascent polypeptide-associated complex (NAC), a dynamic component of the ribosomal exit tunnel, protecting the emerging polypeptides from interaction with other cytoplasmic proteins to ensure appropriate nascent protein targeting. The NAC complex also promotes mitochondrial protein import by enhancing productive ribosome interactions with the outer mitochondrial membrane and blocks the inappropriate interaction of ribosomes translating non-secretory nascent polypeptides with translocation sites in the membrane of the endoplasmic reticulum. EGD2 may also be involved in transcription regulation. The polypeptide is Nascent polypeptide-associated complex subunit alpha (EGD2) (Lodderomyces elongisporus (strain ATCC 11503 / CBS 2605 / JCM 1781 / NBRC 1676 / NRRL YB-4239) (Yeast)).